The primary structure comprises 185 residues: Peptidyl-tRNA hydrolase (185 aa).

Y14 lines the tRNA pocket. H19 (proton acceptor) is an active-site residue. Residues Y64, N66, and N112 each contribute to the tRNA site.

The protein belongs to the PTH family. In terms of assembly, monomer.

The protein resides in the cytoplasm. The enzyme catalyses an N-acyl-L-alpha-aminoacyl-tRNA + H2O = an N-acyl-L-amino acid + a tRNA + H(+). Hydrolyzes ribosome-free peptidyl-tRNAs (with 1 or more amino acids incorporated), which drop off the ribosome during protein synthesis, or as a result of ribosome stalling. Functionally, catalyzes the release of premature peptidyl moieties from peptidyl-tRNA molecules trapped in stalled 50S ribosomal subunits, and thus maintains levels of free tRNAs and 50S ribosomes. The chain is Peptidyl-tRNA hydrolase from Ligilactobacillus salivarius (strain UCC118) (Lactobacillus salivarius).